The primary structure comprises 574 residues: Septation ring formation regulator EzrA (574 aa).

At 1 to 7 the chain is on the extracellular side; it reads MSSGIIL. Residues 8 to 26 traverse the membrane as a helical segment; sequence LIVAIVLLVIIAYLVGVII. Residues 27–574 are Cytoplasmic-facing; it reads RKRNDSLITS…YEKTREHIRF (548 aa). 3 coiled-coil regions span residues 102 to 141, 274 to 350, and 459 to 520; these read NFIRAKHEINSVESQLNLVEEDIASIREALNILKEQEEKN, ELVT…ETES, and QLEA…SFEA.

It belongs to the EzrA family.

It localises to the cell membrane. Functionally, negative regulator of FtsZ ring formation; modulates the frequency and position of FtsZ ring formation. Inhibits FtsZ ring formation at polar sites. Interacts either with FtsZ or with one of its binding partners to promote depolymerization. This chain is Septation ring formation regulator EzrA, found in Streptococcus pyogenes serotype M1.